The sequence spans 263 residues: Protein maestro (263 aa).

The segment at 1–21 (MDQTPRRMLGQPLSSPATQPK) is disordered. The HEAT repeat unit spans residues 128 to 163 (SFFIDITLQTRTLLDDENDSLRYSAFVLFGQLADLA).

Its subcellular location is the nucleus. It is found in the nucleolus. The protein is Protein maestro (MRO) of Bos taurus (Bovine).